The sequence spans 574 residues: Myo-inositol transporter FST1 (574 aa).

Over 1–76 the chain is Cytoplasmic; it reads MGKSRQNSTT…VQFANPKHFT (76 aa). A helical transmembrane segment spans residues 77 to 97; sequence WLLVAFASMGGLLSGLDQSLI. The Extracellular segment spans residues 98–115; it reads SGANLFLPDDLGLTEHEN. Residues 116-136 traverse the membrane as a helical segment; the sequence is SLVNSGMPLGAVGGALLLSPA. Over 137-143 the chain is Cytoplasmic; the sequence is NEYFGRK. The chain crosses the membrane as a helical span at residues 144-164; it reads GAIIISIILYTIGAALEAGSI. Residues 165–173 lie on the Extracellular side of the membrane; sequence NFGMIVSSR. Residues 174–194 traverse the membrane as a helical segment; it reads VILGLGVGLEGGTVPVYVAET. Residues 195-205 are Cytoplasmic-facing; the sequence is VERRIRGNLVS. A helical membrane pass occupies residues 206–226; sequence LYQFNIALGEVLGYAVGAIFL. At 227 to 233 the chain is on the extracellular side; it reads NVPGNWR. Residues 234-254 traverse the membrane as a helical segment; it reads YILGSSLLFSTIMFFGMLFLP. Residues 255-330 lie on the Cytoplasmic side of the membrane; it reads ESPRFLIHQK…RARRALVYAN (76 aa). A helical membrane pass occupies residues 331–351; the sequence is IMILLGQLTGVNAIMYYMSVL. The Extracellular segment spans residues 352–363; that stretch reads MNQIGFDKKESN. A helical transmembrane segment spans residues 364 to 384; it reads YMSLVGGGSLLLGTIPAIFLM. The Cytoplasmic segment spans residues 385–390; that stretch reads ERFGRR. The chain crosses the membrane as a helical span at residues 391-411; it reads FWAITMLPGFFIGLVLIGVSY. The Extracellular portion of the chain corresponds to 412–426; the sequence is QFDVETQLQTVEGLY. A helical transmembrane segment spans residues 427 to 447; it reads LSGLIIYMGFFGSYACLTWVV. The Cytoplasmic segment spans residues 448 to 465; it reads PSEVYPTYLRSYGMTTSD. The chain crosses the membrane as a helical span at residues 466 to 486; that stretch reads ALLFLASFIVTYNFTAMQNAM. The Extracellular segment spans residues 487–490; it reads GKTG. The helical transmembrane segment at 491–511 threads the bilayer; it reads LALGFYGGIAFIGEIYQIFFM. Topologically, residues 512-574 are cytoplasmic; it reads PETKNKTLEE…PKDQVQVSHA (63 aa).

The protein belongs to the major facilitator superfamily. Sugar transporter (TC 2.A.1.1) family.

It is found in the cell membrane. It catalyses the reaction myo-inositol(out) + H(+)(out) = myo-inositol(in) + H(+)(in). In terms of biological role, transporter for myo-inositol. Also appears to transport the polyketide mycotoxin fumonisin B1 (FB1). Does not appear to transport hexose sugars. The protein is Myo-inositol transporter FST1 of Gibberella moniliformis (strain M3125 / FGSC 7600) (Maize ear and stalk rot fungus).